Consider the following 570-residue polypeptide: Formate--tetrahydrofolate ligase (570 aa).

65-72 (TPHGEGKT) lines the ATP pocket.

Belongs to the formate--tetrahydrofolate ligase family.

The enzyme catalyses (6S)-5,6,7,8-tetrahydrofolate + formate + ATP = (6R)-10-formyltetrahydrofolate + ADP + phosphate. The protein operates within one-carbon metabolism; tetrahydrofolate interconversion. This Shewanella putrefaciens (strain CN-32 / ATCC BAA-453) protein is Formate--tetrahydrofolate ligase.